The sequence spans 202 residues: uncharacterized protein (202 aa).

A Smr domain is found at 116–196 (LDLHGMTCSE…GKGTTWVLLK (81 aa)).

This is an uncharacterized protein from Treponema pallidum (strain Nichols).